Reading from the N-terminus, the 389-residue chain is Capreomycidine synthase (389 aa).

Lys-230 carries the post-translational modification N6-(pyridoxal phosphate)lysine.

This sequence belongs to the class-II pyridoxal-phosphate-dependent aminotransferase family. The cofactor is pyridoxal 5'-phosphate.

It carries out the reaction (2S,3S)-hydroxyarginine = (2S,3R)-capreomycidine + H2O. It participates in antibiotic biosynthesis. In terms of biological role, involved in the biosynthesis of capreomycidine, an unusual amino acid used by non-ribosomal peptide synthases (NRPS) to make the tuberactinomycin class of peptide antibiotic such as viomycin and capreomycin. Catalyzes the dehydration of the C3 hydroxyl of (3S)-hydroxy-(2S)-arginine and the intramolecular cyclization to yield (2S,3R)-capreomycidine. In Streptomyces vinaceus, this protein is Capreomycidine synthase.